The following is a 422-amino-acid chain: UDP-N-acetylglucosamine 1-carboxyvinyltransferase (422 aa).

23–24 (KN) is a binding site for phosphoenolpyruvate. A UDP-N-acetyl-alpha-D-glucosamine-binding site is contributed by Arg-92. Catalysis depends on Cys-116, which acts as the Proton donor. Cys-116 bears the 2-(S-cysteinyl)pyruvic acid O-phosphothioketal mark. Residues 121 to 125 (RPVDL), 161 to 165 (KVSVG), Asp-306, and Ile-328 contribute to the UDP-N-acetyl-alpha-D-glucosamine site.

Belongs to the EPSP synthase family. MurA subfamily.

The protein localises to the cytoplasm. It carries out the reaction phosphoenolpyruvate + UDP-N-acetyl-alpha-D-glucosamine = UDP-N-acetyl-3-O-(1-carboxyvinyl)-alpha-D-glucosamine + phosphate. It functions in the pathway cell wall biogenesis; peptidoglycan biosynthesis. Its function is as follows. Cell wall formation. Adds enolpyruvyl to UDP-N-acetylglucosamine. This is UDP-N-acetylglucosamine 1-carboxyvinyltransferase from Aliivibrio fischeri (strain MJ11) (Vibrio fischeri).